Consider the following 820-residue polypeptide: Phenylalanine--tRNA ligase beta subunit (820 aa).

Residues 42-154 (KGGLEGLVIG…EDAVPGTLAK (113 aa)) form the tRNA-binding domain. Residues 413–489 (AQDFIVELTY…RIYGYNNVEI (77 aa)) enclose the B5 domain. Aspartate 467, aspartate 473, glutamate 476, and aspartate 477 together coordinate Mg(2+). Residues 727–820 (SKFPAVKRDL…LEDKLGAKLR (94 aa)) form the FDX-ACB domain.

This sequence belongs to the phenylalanyl-tRNA synthetase beta subunit family. Type 1 subfamily. As to quaternary structure, tetramer of two alpha and two beta subunits. It depends on Mg(2+) as a cofactor.

Its subcellular location is the cytoplasm. The catalysed reaction is tRNA(Phe) + L-phenylalanine + ATP = L-phenylalanyl-tRNA(Phe) + AMP + diphosphate + H(+). The polypeptide is Phenylalanine--tRNA ligase beta subunit (Bacteroides fragilis (strain YCH46)).